Here is a 384-residue protein sequence, read N- to C-terminus: Lipid-A-disaccharide synthase (384 aa).

Belongs to the LpxB family.

The enzyme catalyses 2-N,3-O-bis[(3R)-3-hydroxytetradecanoyl]-alpha-D-glucosaminyl 1-phosphate + UDP-2-N,3-O-bis[(3R)-3-hydroxytetradecanoyl]-alpha-D-glucosamine = lipid A disaccharide (E. coli) + UDP + H(+). It catalyses the reaction a lipid X + a UDP-2-N,3-O-bis[(3R)-3-hydroxyacyl]-alpha-D-glucosamine = a lipid A disaccharide + UDP + H(+). It functions in the pathway glycolipid biosynthesis; lipid IV(A) biosynthesis; lipid IV(A) from (3R)-3-hydroxytetradecanoyl-[acyl-carrier-protein] and UDP-N-acetyl-alpha-D-glucosamine: step 5/6. Its function is as follows. Condensation of UDP-2,3-diacylglucosamine and 2,3-diacylglucosamine-1-phosphate to form lipid A disaccharide, a precursor of lipid A, a phosphorylated glycolipid that anchors the lipopolysaccharide to the outer membrane of the cell. This is Lipid-A-disaccharide synthase from Blochmanniella floridana.